Reading from the N-terminus, the 171-residue chain is 3-hydroxydecanoyl-[acyl-carrier-protein] dehydratase (171 aa).

His70 is an active-site residue.

Belongs to the thioester dehydratase family. FabA subfamily. Homodimer.

The protein localises to the cytoplasm. It carries out the reaction a (3R)-hydroxyacyl-[ACP] = a (2E)-enoyl-[ACP] + H2O. It catalyses the reaction (3R)-hydroxydecanoyl-[ACP] = (2E)-decenoyl-[ACP] + H2O. The catalysed reaction is (2E)-decenoyl-[ACP] = (3Z)-decenoyl-[ACP]. Its pathway is lipid metabolism; fatty acid biosynthesis. Necessary for the introduction of cis unsaturation into fatty acids. Catalyzes the dehydration of (3R)-3-hydroxydecanoyl-ACP to E-(2)-decenoyl-ACP and then its isomerization to Z-(3)-decenoyl-ACP. Can catalyze the dehydratase reaction for beta-hydroxyacyl-ACPs with saturated chain lengths up to 16:0, being most active on intermediate chain length. The polypeptide is 3-hydroxydecanoyl-[acyl-carrier-protein] dehydratase (Shewanella woodyi (strain ATCC 51908 / MS32)).